Reading from the N-terminus, the 147-residue chain is 16 kDa heat shock protein B (147 aa).

The sHSP domain maps to 29 to 141 (NEAGSTYPPY…APSAFRSAAA (113 aa)).

This sequence belongs to the small heat shock protein (HSP20) family.

The sequence is that of 16 kDa heat shock protein B (ibpB) from Azotobacter vinelandii.